The sequence spans 323 residues: tRNA U34 carboxymethyltransferase (323 aa).

Carboxy-S-adenosyl-L-methionine-binding positions include lysine 91, tryptophan 105, lysine 110, glycine 130, 152–154 (DPT), 181–182 (IE), methionine 196, tyrosine 200, and arginine 315.

The protein belongs to the class I-like SAM-binding methyltransferase superfamily. CmoB family. In terms of assembly, homotetramer.

It catalyses the reaction carboxy-S-adenosyl-L-methionine + 5-hydroxyuridine(34) in tRNA = 5-carboxymethoxyuridine(34) in tRNA + S-adenosyl-L-homocysteine + H(+). In terms of biological role, catalyzes carboxymethyl transfer from carboxy-S-adenosyl-L-methionine (Cx-SAM) to 5-hydroxyuridine (ho5U) to form 5-carboxymethoxyuridine (cmo5U) at position 34 in tRNAs. The chain is tRNA U34 carboxymethyltransferase from Photorhabdus laumondii subsp. laumondii (strain DSM 15139 / CIP 105565 / TT01) (Photorhabdus luminescens subsp. laumondii).